Here is a 186-residue protein sequence, read N- to C-terminus: Small ribosomal subunit protein uS5 (186 aa).

Residues phenylalanine 20 to valine 83 enclose the S5 DRBM domain.

Belongs to the universal ribosomal protein uS5 family. Part of the 30S ribosomal subunit. Contacts proteins S4 and S8.

Its function is as follows. With S4 and S12 plays an important role in translational accuracy. Located at the back of the 30S subunit body where it stabilizes the conformation of the head with respect to the body. The protein is Small ribosomal subunit protein uS5 of Brucella ovis (strain ATCC 25840 / 63/290 / NCTC 10512).